The following is a 349-amino-acid chain: MEPTSGFAEQPGPEKVESEEQEPAQWQALPVLSEQQSGAVELVLAYAAPVLDKRQTSRLLREVSAVYPLPAQPHLKRVRPSRSAGGAHSSDLLLCLAGPSAGPRSLAELLPRPAVDPRGLGTPFLVPVPARPPLTRSQFEEARAHWPTSFHEDKQVTSALAGQLFSAQARAAMQTHMERAVRAAQRAAAQGLRAVGAVVVDPASDHVLATGHDCCSEASPLLHAVMVCIDLVAQGQGRGSCDLRRHPACSFTQATATQSARAGSVRKLDEDSLPYVCTGYDLYVTREPCVMCAMALVHARIQRVFYGAPSPDGALGTRFRVHARPDLNHRFQVFRGILEDQCRQLDPDP.

An N-acetylmethionine modification is found at methionine 1. A disordered region spans residues 1 to 25; the sequence is MEPTSGFAEQPGPEKVESEEQEPAQ. The CMP/dCMP-type deaminase domain occupies 171–334; it reads AAMQTHMERA…PDLNHRFQVF (164 aa). The Zn(2+) site is built by histidine 223, cysteine 289, and cysteine 292.

It belongs to the cytidine and deoxycytidylate deaminase family. ADAT3 subfamily. Zn(2+) is required as a cofactor.

The protein is Probable inactive tRNA-specific adenosine deaminase-like protein 3 (Adat3) of Rattus norvegicus (Rat).